A 1373-amino-acid chain; its full sequence is DNA-directed RNA polymerase subunit beta'' (1373 aa).

Residues Cys-220, Cys-291, Cys-298, and Cys-301 each contribute to the Zn(2+) site.

Belongs to the RNA polymerase beta' chain family. RpoC2 subfamily. In plastids the minimal PEP RNA polymerase catalytic core is composed of four subunits: alpha, beta, beta', and beta''. When a (nuclear-encoded) sigma factor is associated with the core the holoenzyme is formed, which can initiate transcription. The cofactor is Zn(2+).

The protein localises to the plastid. Its subcellular location is the chloroplast. It carries out the reaction RNA(n) + a ribonucleoside 5'-triphosphate = RNA(n+1) + diphosphate. In terms of biological role, DNA-dependent RNA polymerase catalyzes the transcription of DNA into RNA using the four ribonucleoside triphosphates as substrates. The chain is DNA-directed RNA polymerase subunit beta'' from Silene latifolia (White campion).